Reading from the N-terminus, the 1464-residue chain is Alpha-glucan water dikinase, chloroplastic (1464 aa).

A chloroplast-targeting transit peptide spans 1–77 (MSNSLGNNLL…KRAFSSSPHA (77 aa)). The active-site Tele-phosphohistidine intermediate is His1069.

It belongs to the PEP-utilizing enzyme family. As to quaternary structure, homodimer. Mg(2+) is required as a cofactor. Expressed in leaves.

It localises to the plastid. It is found in the chloroplast. The enzyme catalyses [(1-&gt;4)-alpha-D-glucosyl](n) + n ATP + n H2O = [(1-&gt;4)-6-phospho-alpha-D-glucosyl](n) + n AMP + n phosphate + 2n H(+). It carries out the reaction ATP + protein L-histidine = ADP + protein N-phospho-L-histidine.. Mediates the incorporation of phosphate into starch-like alpha-glucan, mostly at the C-6 position of glucose units. Acts as an overall regulator of starch mobilization. Required for starch degradation, suggesting that the phosphate content of starch regulates its degradability. More active on alpha-1,6 branched amylopectin. The protein is Alpha-glucan water dikinase, chloroplastic (R1) of Solanum tuberosum (Potato).